A 40-amino-acid polypeptide reads, in one-letter code: Photosystem II reaction center protein J (40 aa).

Residue Met2 is modified to N-acetylmethionine. Over 2–11 (MSEGGRIPLW) the chain is Cytoplasmic. Residues 12-26 (IVATVAGMGVIVIVG) form a helical membrane-spanning segment. The Lumenal portion of the chain corresponds to 27–40 (LFFYGAYAGLGSSL).

It belongs to the PsbJ family. In terms of assembly, PSII is composed of 1 copy each of membrane proteins PsbA, PsbB, PsbC, PsbD, PsbE, PsbF, PsbH, PsbI, PsbJ, PsbK, PsbL, PsbM, PsbT, PsbX, PsbY, PsbZ, Psb30/Ycf12, peripheral proteins PsbO, CyanoQ (PsbQ), PsbU, PsbV and a large number of cofactors. It forms dimeric complexes. It depends on PSII binds multiple chlorophylls, carotenoids and specific lipids. as a cofactor.

It localises to the cellular thylakoid membrane. One of the components of the core complex of photosystem II (PSII). PSII is a light-driven water:plastoquinone oxidoreductase that uses light energy to abstract electrons from H(2)O, generating O(2) and a proton gradient subsequently used for ATP formation. It consists of a core antenna complex that captures photons, and an electron transfer chain that converts photonic excitation into a charge separation. Its function is as follows. May play a regulatory role in PSII biogenesis. The sequence is that of Photosystem II reaction center protein J from Thermosynechococcus vestitus (strain NIES-2133 / IAM M-273 / BP-1).